The primary structure comprises 376 residues: Penicillin V acylase (376 aa).

Positions 1–29 are cleaved as a signal peptide; the sequence is MIKNNKRIKSTVCALSLVALTLGSAVSLA. Catalysis depends on C30, which acts as the Nucleophile.

The protein belongs to the peptidase C59 family. In terms of assembly, homotetramer. Dimer of dimers.

It localises to the periplasm. The catalysed reaction is a penicillin + H2O = 6-aminopenicillanate + a carboxylate. Exhibits uncharacteristic kinetic behavior, showing positive cooperativity coupled with substrate inhibition. Penicillin acylase activity is enhanced in the presence of the reducing agent DTT, indicating active sulfhydryl group in the enzyme. Also shows enhanced activity in presence of organic solvents and detergents. Inhibited largely in presence of Ag(+), Hg(2+) and Cd(2+) ions, which have strong affinities for sulfhydryl groups. Activity is also inhibited by bile salts. Catalyzes the hydrolysis of penicillin V to 6-aminopenicillanate (6-APA). Shows high specificity towards penicillin V. Can use other beta-lactam substrates, including penicillin G, ampicillin, cephalexin, cloxacillin and dicloxacillin, but at a rate less than 10% of that of penicillin V. Does not show any activity with glyco- or tauro-conjugated bile salts. The chain is Penicillin V acylase from Pectobacterium atrosepticum (strain SCRI 1043 / ATCC BAA-672) (Erwinia carotovora subsp. atroseptica).